Reading from the N-terminus, the 321-residue chain is tRNA U34 carboxymethyltransferase (321 aa).

Carboxy-S-adenosyl-L-methionine contacts are provided by residues K90, W104, K109, G129, 151–153, 180–181, M195, Y199, and R314; these read DPT and IE.

Belongs to the class I-like SAM-binding methyltransferase superfamily. CmoB family. In terms of assembly, homotetramer.

The enzyme catalyses carboxy-S-adenosyl-L-methionine + 5-hydroxyuridine(34) in tRNA = 5-carboxymethoxyuridine(34) in tRNA + S-adenosyl-L-homocysteine + H(+). In terms of biological role, catalyzes carboxymethyl transfer from carboxy-S-adenosyl-L-methionine (Cx-SAM) to 5-hydroxyuridine (ho5U) to form 5-carboxymethoxyuridine (cmo5U) at position 34 in tRNAs. This is tRNA U34 carboxymethyltransferase from Mannheimia succiniciproducens (strain KCTC 0769BP / MBEL55E).